The sequence spans 675 residues: UvrABC system protein B (675 aa).

One can recognise a Helicase ATP-binding domain in the interval 32 to 417; it reads EGLSDGLAYQ…EHAGQVVEQV (386 aa). 45–52 provides a ligand contact to ATP; it reads GVTGSGKT. The Beta-hairpin signature appears at 98–121; it reads YYDYYQPEAYVPSRDLFIEKDSAI. In terms of domain architecture, Helicase C-terminal spans 436–602; that stretch reads QVDDLMSEIN…QIKKQVKDII (167 aa). One can recognise a UVR domain in the interval 634–669; it reads IKEIAKLEKAMQQAARDLQFEEAAVLRDRIRDIKEN.

This sequence belongs to the UvrB family. Forms a heterotetramer with UvrA during the search for lesions. Interacts with UvrC in an incision complex.

The protein localises to the cytoplasm. The UvrABC repair system catalyzes the recognition and processing of DNA lesions. A damage recognition complex composed of 2 UvrA and 2 UvrB subunits scans DNA for abnormalities. Upon binding of the UvrA(2)B(2) complex to a putative damaged site, the DNA wraps around one UvrB monomer. DNA wrap is dependent on ATP binding by UvrB and probably causes local melting of the DNA helix, facilitating insertion of UvrB beta-hairpin between the DNA strands. Then UvrB probes one DNA strand for the presence of a lesion. If a lesion is found the UvrA subunits dissociate and the UvrB-DNA preincision complex is formed. This complex is subsequently bound by UvrC and the second UvrB is released. If no lesion is found, the DNA wraps around the other UvrB subunit that will check the other stand for damage. The chain is UvrABC system protein B from Neisseria meningitidis serogroup B (strain ATCC BAA-335 / MC58).